The sequence spans 216 residues: Small ribosomal subunit protein uS3 (216 aa).

Residues 20-91 (LKEFFEKALV…SVEIVVEKVH (72 aa)) enclose the KH type-2 domain.

Belongs to the universal ribosomal protein uS3 family.

The sequence is that of Small ribosomal subunit protein uS3 (RPS3) from Encephalitozoon cuniculi (strain GB-M1) (Microsporidian parasite).